The following is a 310-amino-acid chain: Olfactory receptor 4D1 (310 aa).

Residues methionine 1 to lysine 25 lie on the Extracellular side of the membrane. Asparagine 5 carries N-linked (GlcNAc...) asparagine glycosylation. The chain crosses the membrane as a helical span at residues phenylalanine 26–valine 49. Residues threonine 50–threonine 57 lie on the Cytoplasmic side of the membrane. The chain crosses the membrane as a helical span at residues proline 58–proline 79. Over lysine 80–glutamine 100 the chain is Extracellular. Cysteines 97 and 189 form a disulfide. Residues isoleucine 101–tyrosine 120 traverse the membrane as a helical segment. Topologically, residues aspartate 121 to glutamine 139 are cytoplasmic. Residues leucine 140–valine 158 form a helical membrane-spanning segment. Over glutamine 159 to leucine 195 the chain is Extracellular. The helical transmembrane segment at glutamate 196 to threonine 219 threads the bilayer. At valine 220–lysine 235 the chain is on the cytoplasmic side. Residues alanine 236–tyrosine 258 form a helical membrane-spanning segment. The Extracellular segment spans residues threonine 259 to lysine 269. A helical membrane pass occupies residues alanine 270–leucine 289. The Cytoplasmic portion of the chain corresponds to arginine 290–glutamate 310.

It belongs to the G-protein coupled receptor 1 family.

The protein localises to the cell membrane. Its function is as follows. Odorant receptor. The protein is Olfactory receptor 4D1 (OR4D1) of Homo sapiens (Human).